A 292-amino-acid polypeptide reads, in one-letter code: Succinate dehydrogenase assembly factor 2, mitochondrial (292 aa).

2 disordered regions span residues 27–68 (RSFG…NTTS) and 266–292 (TGFH…VFDS). Positions 55-68 (TNRPPNQHVPNTTS) are enriched in polar residues.

The protein belongs to the SDHAF2 family. Interacts with the flavoprotein subunit within the SDH catalytic dimer.

The protein resides in the mitochondrion matrix. Plays an essential role in the assembly of succinate dehydrogenase (SDH), an enzyme complex (also referred to as respiratory complex II) that is a component of both the tricarboxylic acid (TCA) cycle and the mitochondrial electron transport chain, and which couples the oxidation of succinate to fumarate with the reduction of ubiquinone (coenzyme Q) to ubiquinol. Required for flavinylation (covalent attachment of FAD) of the flavoprotein subunit of the SDH catalytic dimer. The chain is Succinate dehydrogenase assembly factor 2, mitochondrial from Aspergillus flavus (strain ATCC 200026 / FGSC A1120 / IAM 13836 / NRRL 3357 / JCM 12722 / SRRC 167).